The chain runs to 199 residues: Tumor necrosis factor ligand superfamily member 4 (199 aa).

Residues 1 to 25 are Cytoplasmic-facing; the sequence is MEGEGVQPPDENLENGSRPRFKWKK. A helical; Signal-anchor for type II membrane protein membrane pass occupies residues 26-48; it reads VLRLVVSGIKAAGLLLCVVYVCL. At 49–199 the chain is on the extracellular side; that stretch reads QFSSSPAKDS…YSSTVNQVPL (151 aa). Residues 59 to 176 form the THD domain; sequence PIQRLRAPVT…QINDGELIIV (118 aa). Intrachain disulfides connect C70-C163 and C98-C184. Residues N91 and N157 are each glycosylated (N-linked (GlcNAc...) asparagine).

It belongs to the tumor necrosis factor family. Homotrimer. As to expression, detected in T-cell lines, but not in a macrophage cell line.

It is found in the membrane. In terms of biological role, cytokine that binds to TNFRSF4. Co-stimulates T-cell proliferation and cytokine production. The chain is Tumor necrosis factor ligand superfamily member 4 (Tnfsf4) from Rattus norvegicus (Rat).